Reading from the N-terminus, the 1197-residue chain is SRC kinase signaling inhibitor 1 (1197 aa).

Residues alanine 19–arginine 45 are compositionally biased toward basic and acidic residues. The segment at alanine 19–asparagine 80 is disordered. Residues serine 47 and serine 52 each carry the phosphoserine modification. Positions leucine 65–glycine 75 are enriched in gly residues. Position 79 is a phosphoserine (serine 79). Phosphothreonine is present on threonine 86. Phosphoserine is present on residues serine 87, serine 98, serine 178, serine 200, serine 204, serine 214, and serine 260. A Phosphotyrosine modification is found at tyrosine 276. Residues alanine 319 to leucine 415 form a disordered region. The segment covering arginine 321–asparagine 331 has biased composition (polar residues). Positions leucine 332–serine 341 are enriched in low complexity. Phosphoserine occurs at positions 333, 342, and 359. The span at proline 348 to serine 366 shows a compositional bias: low complexity. Arginine 364 and arginine 371 each carry omega-N-methylarginine. Phosphoserine occurs at positions 378, 397, and 399. Polar residues predominate over residues proline 391–proline 400. The span at leucine 404–leucine 415 shows a compositional bias: basic and acidic residues. Tyrosine 431 is modified (phosphotyrosine). The interval glycine 501–proline 676 is disordered. Positions glycine 520–glycine 531 are enriched in pro residues. Phosphoserine is present on residues serine 527, serine 530, and serine 534. Omega-N-methylarginine is present on arginine 535. A phosphoserine mark is found at serine 537, serine 547, serine 549, serine 551, and serine 556. Over residues lysine 595 to glutamate 607 the composition is skewed to basic and acidic residues. Residues serine 631 and serine 655 each carry the phosphoserine modification. Threonine 658 and threonine 671 each carry phosphothreonine. The tract at residues arginine 681 to valine 731 is interaction with SNAP25. Coiled coils occupy residues leucine 688–leucine 708 and glutamate 760–aspartate 780. Residues serine 878 and serine 900 each carry the phosphoserine modification. Disordered regions lie at residues glycine 891–tryptophan 949 and aspartate 983–serine 1065. Threonine 918 is modified (phosphothreonine). Serine 1021 carries the phosphoserine modification. Pro residues predominate over residues lysine 1036–arginine 1045. Residues serine 1077 and serine 1094 each carry the phosphoserine modification. Residues serine 1141–threonine 1163 are disordered.

This sequence belongs to the SRCIN1 family. As to quaternary structure, interacts with BCAR1/p130Cas through its C-terminal domain and with CSK, CTTN and SRC. Also interacts with MAPRE3/EB3, SORBS3/vinexin and the N-terminal coiled-coil region of SNAP25. Post-translationally, tyrosine-phosphorylated in response to EGF and to cell adhesion to integrin ligands. As to expression, expressed exclusively in brain. Abundant in telencephalon and expressed moderately in cerebellum, hypothalamus, thalamus, superior and inferior colliculi, and olfactory bulb. No expression detected in medulla oblongata, spinal cord or pituitary gland. Enriched in the neuropil rather than soma in the thalamus, corpus striatum and cerebral cortex. Detected in astrocytes.

The protein localises to the cytoplasm. It is found in the cytoskeleton. It localises to the cell projection. Its subcellular location is the axon. The protein resides in the dendrite. The protein localises to the presynapse. It is found in the postsynapse. It localises to the postsynaptic density. Its function is as follows. Acts as a negative regulator of SRC by activating CSK which inhibits SRC activity and downstream signaling, leading to impaired cell spreading and migration. Regulates dendritic spine morphology. Involved in calcium-dependent exocytosis. May play a role in neurotransmitter release or synapse maintenance. In Rattus norvegicus (Rat), this protein is SRC kinase signaling inhibitor 1.